A 338-amino-acid polypeptide reads, in one-letter code: MIEIEKVCVDFTAGRGTPTRAVDDVSLHIAAGEIFGIVGTSGAGKSTLLRTLNALTRPSQGRVNVNGVEISALDGKALRQARQRIGMIFQHFNLMHTRTVAQNVAFSLKAAGWERSKIAPRVAEILTLVGLADKANRFPVQLSGGQKQRVGIARAIANHPDVLLCDEPTSALDLETSATILALLRQINAQLGITIVLITHEMNVIKSICDRVAVMSGGKVVESGEVFDVFAHPQHAFTQQLVSHTLNLTLPERLREHLPGQLLKILFIGDSAEQPVLSEVAIKFGVAVNILHGKIEYIGERALGILVVQLTAPHNPTAVAAAVEHIRQRTAQVEVIRG.

Positions 2–242 (IEIEKVCVDF…PQHAFTQQLV (241 aa)) constitute an ABC transporter domain. An ATP-binding site is contributed by 39–46 (GTSGAGKS).

It belongs to the ABC transporter superfamily. Methionine importer (TC 3.A.1.24) family. The complex is composed of two ATP-binding proteins (MetN), two transmembrane proteins (MetI) and a solute-binding protein (MetQ).

The protein localises to the cell inner membrane. The enzyme catalyses L-methionine(out) + ATP + H2O = L-methionine(in) + ADP + phosphate + H(+). The catalysed reaction is D-methionine(out) + ATP + H2O = D-methionine(in) + ADP + phosphate + H(+). Its function is as follows. Part of the ABC transporter complex MetNIQ involved in methionine import. Responsible for energy coupling to the transport system. The polypeptide is Methionine import ATP-binding protein MetN 2 (Salmonella typhimurium (strain LT2 / SGSC1412 / ATCC 700720)).